The following is an 807-amino-acid chain: Maternal DNA replication licensing factor mcm3 (807 aa).

Positions 295-502 constitute an MCM domain; sequence IFEHLSKSLA…NDQEIADHVL (208 aa). An ATP-binding site is contributed by 345-352; sequence GDPSVAKS. The Arginine finger signature appears at 477–480; sequence SRFD. A compositionally biased stretch (basic and acidic residues) spans 664–673; the sequence is KTDKDLHDEN. The segment at 664-741 is disordered; the sequence is KTDKDLHDEN…QDGKRSLSQN (78 aa). Polar residues predominate over residues 707-723; that stretch reads FSEQDSSLNENLSQSLR. A compositionally biased stretch (basic and acidic residues) spans 727–741; it reads KKAESQDGKRSLSQN.

It belongs to the MCM family. Component of the mcm2-7 complex (RLF-M). The complex forms a toroidal hexameric ring with the proposed subunit order mcm2-mcm6-mcm4-mcm7-mcm3-mcm5. The heterodimer of mmcm3/mcm5 interacts with mcm4, mmcm6, mcm7 and weakly with mcm2. Interacts with mcm7, though this interaction may not be direct, and remains in a complex with mcm7 throughout the cell cycle. Component of the CMG helicase complex, composed of the mcm2-7 complex, the GINS complex and cdc45.

The protein localises to the nucleus. Its subcellular location is the chromosome. It carries out the reaction ATP + H2O = ADP + phosphate + H(+). Its function is as follows. Acts as a component of the mcm2-7 complex (mcm complex) which is the putative replicative helicase essential for 'once per cell cycle' DNA replication initiation and elongation in eukaryotic cells. The active ATPase sites in the mcm2-7 ring are formed through the interaction surfaces of two neighboring subunits such that a critical structure of a conserved arginine finger motif is provided in trans relative to the ATP-binding site of the Walker A box of the adjacent subunit. The six ATPase active sites, however, are likely to contribute differentially to the complex helicase activity. The existence of maternal and zygotic forms of mcm3 and mcm6 suggests that specific forms of mcm2-7 complexes may be used during different stages of development. This is Maternal DNA replication licensing factor mcm3 (mmcm3) from Xenopus laevis (African clawed frog).